Consider the following 242-residue polypeptide: MIKNYLGRRWLNNPAIQAYVKQNAAVAHSTVFQGNLYEYTVMRELSEKLRMTKLRKTGGAHDGGVDIKGSWPVDDIYWKISSLMPNLEMASNIKRTNSQNGFVLKPLKYRIIDHTFEPLKVLVQCKAFTKSKLSPREFRELVGTFTSLVSHSQRNKTVCIMCSPHMLTKDTLNLINNITLPLIYLRVEMLKEKTDGHFDLINSGKLINYYENSYASTLMQDCKISEWLKLKLYKNSDFNSEK.

The protein belongs to the RRG7 family.

It is found in the mitochondrion. The sequence is that of Required for respiratory growth protein 7, mitochondrial (RRG7) from Saccharomyces cerevisiae (strain ATCC 204508 / S288c) (Baker's yeast).